The following is a 234-amino-acid chain: BTB/POZ domain-containing protein KCTD5 (234 aa).

An N-acetylalanine modification is found at alanine 2. The residue at position 10 (serine 10) is a Phosphoserine. Residues 44–146 (KWVRLNVGGT…LVKDKIRERD (103 aa)) enclose the BTB domain. A disordered region spans residues 213–234 (PYGTASEPSEKAKILQERGSRM). Residues 220-234 (PSEKAKILQERGSRM) are compositionally biased toward basic and acidic residues.

As to quaternary structure, homopentamer. Interacts (via C-terminus) with GRASP55/GORASP2. Interacts with CUL3 and with ubiquitinated proteins. Interacts with CRY1. In terms of assembly, (Microbial infection) Interacts with adeno-associated virus 2 (AAV-2) REP proteins.

Its subcellular location is the cytoplasm. It is found in the cytosol. The protein resides in the nucleus. Functionally, its interaction with CUL3 suggests that it may act as a substrate adapter in some E3 ligase complex. Does not affect the function of Kv channel Kv2.1/KCNB1, Kv1.2/KCNA2, Kv4.2/KCND2 and Kv3.4/KCNC4. In Homo sapiens (Human), this protein is BTB/POZ domain-containing protein KCTD5 (KCTD5).